The sequence spans 855 residues: Leucine--tRNA ligase (855 aa).

Positions 45-55 match the 'HIGH' region motif; sequence PYPSGRLHMGH. A 'KMSKS' region motif is present at residues 619-623; the sequence is KMSKS. ATP is bound at residue Lys-622.

It belongs to the class-I aminoacyl-tRNA synthetase family.

Its subcellular location is the cytoplasm. The enzyme catalyses tRNA(Leu) + L-leucine + ATP = L-leucyl-tRNA(Leu) + AMP + diphosphate. This chain is Leucine--tRNA ligase, found in Hyphomonas neptunium (strain ATCC 15444).